A 911-amino-acid chain; its full sequence is MLTPFKLFTKIFKNRNDRVLLRMKKVVDMINYMEKDIQKLNDSQLASKTNEFRKSIESGVKNLENLLPQAFAVVRESIKRIFNIRLFDVQLLGGIVLNSRCIAEMKTGEGKTLTATLPAYLNALSGQGVHIVTVNNYLAHRDAINNKPLFEFLGLTVGINLPGLSASMKRAAYTADITYGTNNEYGFDYLRDNMVFVPEERVQRGLHYALIDEVDSILIDEARTPLVISGPSDDTSLLYSKINELVFSIIQKNKRNIDNLQKEEYFTVDEKSRQVILTENGLVLIEQLLIKSGIMNQGESLYSSDNIILMHHVNAAFRAHILFTCEVDYLVKNGEILIIDEHTGRVMPGRRWSDGLHQAIEAKEHVTIQNENQTLASITFQNYFRLYEKLSGMTGTANTEAFEFQSIYKLDTIVIPTNRPMIRNDFPDIIYMTEHEKIEAIINDIKDCVKRNQPVLVGTISIEKSEIISHALSQIGIMHKVLNAKFHAAEADIIAQAGYPGAVTIATNMAGRGTDIILGGNWRAEITALHKANTCKILKIKSDWKKRHHAVLKSGGLHVIGTERHESRRIDNQLRGRSGRQGDIGSSRFYLSMEDSLIRIFASNRLVNMMKKLGMKSGESIEHPWITKAIAHAQKKVENRNFDIRKQLLEYDDVANDQRRVIYEQRDKLLNISDISDIIRNIRCDVVEKLFNIYIPLEIIENKRDVMKLEECLEKDFCLELPLLKWIEVEPRLYEEKEILRQRILENMTQKYEHTRKIIGIDIMCSFEKEIMLRTFDVLWKEHLASMDYLRQGIHLRGYAQKDPKQEYKRESFSMFTKMLDHLKYEVISEVSKLVIELFNKKESILNSTNKYNDFQSINTQVMNTKLLSIDHFLNQHTLTKNKTVSRNDACPCGSNKKFKECHGKIVNKRH.

ATP is bound by residues glutamine 90, 108-112, and aspartate 515; that span reads GEGKT. Cysteine 891, cysteine 893, cysteine 902, and histidine 903 together coordinate Zn(2+).

Belongs to the SecA family. As to quaternary structure, monomer and homodimer. Part of the essential Sec protein translocation apparatus which comprises SecA, SecYEG and auxiliary proteins SecDF-YajC and YidC. The cofactor is Zn(2+).

It is found in the cell inner membrane. It localises to the cytoplasm. It carries out the reaction ATP + H2O + cellular proteinSide 1 = ADP + phosphate + cellular proteinSide 2.. In terms of biological role, part of the Sec protein translocase complex. Interacts with the SecYEG preprotein conducting channel. Has a central role in coupling the hydrolysis of ATP to the transfer of proteins into and across the cell membrane, serving both as a receptor for the preprotein-SecB complex and as an ATP-driven molecular motor driving the stepwise translocation of polypeptide chains across the membrane. The polypeptide is Protein translocase subunit SecA (Blochmanniella pennsylvanica (strain BPEN)).